Here is a 440-residue protein sequence, read N- to C-terminus: tRNA(Ile)-lysidine synthase (440 aa).

An ATP-binding site is contributed by 31 to 36; sequence SGGADS.

The protein belongs to the tRNA(Ile)-lysidine synthase family.

The protein localises to the cytoplasm. It carries out the reaction cytidine(34) in tRNA(Ile2) + L-lysine + ATP = lysidine(34) in tRNA(Ile2) + AMP + diphosphate + H(+). Functionally, ligates lysine onto the cytidine present at position 34 of the AUA codon-specific tRNA(Ile) that contains the anticodon CAU, in an ATP-dependent manner. Cytidine is converted to lysidine, thus changing the amino acid specificity of the tRNA from methionine to isoleucine. This Borreliella afzelii (strain PKo) (Borrelia afzelii) protein is tRNA(Ile)-lysidine synthase.